The chain runs to 114 residues: Putative membrane protein insertion efficiency factor (114 aa).

Belongs to the UPF0161 family.

The protein resides in the cell inner membrane. Its function is as follows. Could be involved in insertion of integral membrane proteins into the membrane. This Nitrobacter hamburgensis (strain DSM 10229 / NCIMB 13809 / X14) protein is Putative membrane protein insertion efficiency factor.